Consider the following 340-residue polypeptide: Tartrate-resistant acid phosphatase type 5 (340 aa).

The N-terminal stretch at 1–20 (MDTWTVLLILQASLVLPGAV) is a signal peptide. Residues aspartate 41, aspartate 79, tyrosine 82, and asparagine 118 each coordinate Fe cation. N-linked (GlcNAc...) asparagine glycans are attached at residues asparagine 124 and asparagine 155. A disulfide bridge links cysteine 169 with cysteine 227. Residues histidine 213, histidine 248, and histidine 250 each contribute to the Fe cation site.

Requires Fe cation as cofactor.

Its subcellular location is the secreted. The catalysed reaction is a phosphate monoester + H2O = an alcohol + phosphate. Functionally, uteroferrin is a phosphoprotein phosphatase, synthesized in response to progesterone. It appears to function in transplacental transport of iron in pig. This chain is Tartrate-resistant acid phosphatase type 5 (ACP5), found in Sus scrofa (Pig).